Here is a 91-residue protein sequence, read N- to C-terminus: Large ribosomal subunit protein bL27 (91 aa).

The tract at residues 1–24 is disordered; that stretch reads MAHKKGVGSSRNGRDSNPKMRGVK.

Belongs to the bacterial ribosomal protein bL27 family.

The protein is Large ribosomal subunit protein bL27 of Chloroflexus aggregans (strain MD-66 / DSM 9485).